The chain runs to 596 residues: Cytochrome P450 monooxygenase FUM15 (596 aa).

The disordered stretch occupies residues 476 to 512 (DRWLSPKNGNREATEQSKFKIGNQKRDSTAAPEVTQE). Positions 484 to 503 (GNREATEQSKFKIGNQKRDS) are enriched in basic and acidic residues. Position 536 (cysteine 536) interacts with heme.

The protein belongs to the cytochrome P450 family. The cofactor is heme.

It is found in the endoplasmic reticulum. It participates in secondary metabolite biosynthesis. Functionally, cytochrome P450 monooxygenase; part of the gene cluster that mediates the biosynthesis of fumonisins B1 (FB1), B2 (FB2), B3 (FB3), and B4 (FB4), which are carcinogenic mycotoxins. Within the pathway, FUM15 may be responsible for the hydroxylations at positions C-14 and/or C-15. Also plays a role in self-protection from FB1 toxicity, probably through derivatization of FB1, and may contribute to ceramide biosynthesis. The biosynthesis starts with the FUM1-catalyzed carbon chain assembly from one molecule of acetyl-CoA, eight molecules of malonyl-CoA, and two molecules of methionine (in S-adenosyl form). The C18 polyketide chain is released from the enzyme by a nucleophilic attack of a carbanion, which is derived from R-carbon of alanine by decarboxylation, on the carbonyl carbon of polyketide acyl chain. This step is catalyzed by the pyridoxal 5'-phosphate-dependent aminoacyl transferase FUM8. The resultant 3-keto intermediate is then stereospecifically reduced to a 3-hydroxyl product by reductase FUM13. Subsequent oxidations at C-10 by the cytochrome P450 monooxygenase FUM2, C-14 and C-15 by FUM6, FUM12 or FUM15, tricarballylic esterification of the hydroxyl groups on C-14 and C-15 by acyltransferase FUM14, and C-5 hydroxylation by 2-keto-glutarate-dependent dioxygenase FUM3 furnish the biosynthesis of fumonisins. The tricarballylic moieties are most likely derived from the citric acid cycle, and their addition to the carbon backbone may involve FUM7, FUM10, FUM11 and FUM14. This is Cytochrome P450 monooxygenase FUM15 from Gibberella moniliformis (strain M3125 / FGSC 7600) (Maize ear and stalk rot fungus).